We begin with the raw amino-acid sequence, 135 residues long: MLSPKRTRFRKQHRGRMKGISSRGNRICFGRYALQALEPAWITSRQIEAGRRAMTRNVRRGGKIWVRIFPDKPVTLRPSETRMGSGKGSPEYWVAVVKPGRMIYEMGGVAENIAKKAISIAASKMPIRTQFIILR.

The protein belongs to the universal ribosomal protein uL16 family. In terms of assembly, part of the 50S ribosomal subunit.

Its subcellular location is the plastid. The protein resides in the chloroplast. The polypeptide is Large ribosomal subunit protein uL16c (Populus alba (White poplar)).